A 239-amino-acid polypeptide reads, in one-letter code: Octanoyltransferase (239 aa).

The 181-residue stretch at 59-239 (PFSPQAVWLL…KRRFKLNWEK (181 aa)) folds into the BPL/LPL catalytic domain. Substrate contacts are provided by residues 101–108 (RGGEVTHH), 168–170 (SIG), and 181–183 (GFS). C199 functions as the Acyl-thioester intermediate in the catalytic mechanism.

This sequence belongs to the LipB family.

It is found in the cytoplasm. The enzyme catalyses octanoyl-[ACP] + L-lysyl-[protein] = N(6)-octanoyl-L-lysyl-[protein] + holo-[ACP] + H(+). It participates in protein modification; protein lipoylation via endogenous pathway; protein N(6)-(lipoyl)lysine from octanoyl-[acyl-carrier-protein]: step 1/2. Functionally, catalyzes the transfer of endogenously produced octanoic acid from octanoyl-acyl-carrier-protein onto the lipoyl domains of lipoate-dependent enzymes. Lipoyl-ACP can also act as a substrate although octanoyl-ACP is likely to be the physiological substrate. This chain is Octanoyltransferase, found in Prochlorococcus marinus (strain NATL2A).